Here is a 686-residue protein sequence, read N- to C-terminus: MAITKGEDVYASLLLNDAYLPGALVLAHSLRDSGTHKKLAILITPENISNEVVEQLQTVYDYVIPVETIQNDRPANLFLMNRPDLHSAFTKINLWKQTQFRKIVYIDADVVAYRAPDELFDLPHAFSAAPDIGWPDLFNTGVMVLSPNMGDYYAMLAMAERGISFDGADQGLLNMHFRNTYNRLSFTYNVTPSAHYQYIPAYKHFQSSINLLHFIGSEKPWVQGRTQTTGSSTYDEMIGRWWAVYDRHYRGNSNKTTDVVQKFVKGEQQQQQQQQQRNVSFQLPSSQSHKTQSHQTQSQNTHSTYTSHGASWDASRHSPPAGSKPEAANFPQTHYTMSSNTQQFVPPARYPSPPKDMWYKVPEAAPTQKPAPIFPWEKQAPEPTRVFPEPPPEQGKLSAASTATPSAVASATASPTLEPKSEAVTPTTPASANPWTSFTTRGNAWDDVPEINRYVDALQKHRRSGSKGSAAATSRPTSPGRAQSRSRKSSRVTDFPTEDDRPSLPVTPAPIQGPRSSRGENERQFPAAAGVPAQSEWNPAVQLEKLAIHQQETLQKLGERPAFGGLAIGTAGKEIPARALPFGSEDARSPTYVTQYPSVLSPKPLRANTTGTNSVRRILTIDEEGGDVPLTTTEKKTPSPLPTQPSVTTAPPSYQGPGVAFEKGEDFPTHETPALPTEEERDVLET.

Residues Leu-13, Asn-16, Tyr-19, and Arg-82 each coordinate UDP. The UDP-alpha-D-glucose site is built by Leu-13, Asn-16, Tyr-19, Arg-82, Lys-91, Asp-107, Ala-108, Asp-109, Asn-139, Thr-140, Asp-166, Asp-169, and Gln-170. Residues Asp-107, Ala-108, and Asp-109 each contribute to the UDP site. Asp-107 contributes to the Mn(2+) binding site. Asp-109 is a Mn(2+) binding site. Tyr-196 and Tyr-198 each carry an O-linked (Glc...) tyrosine glycan. 3 residues coordinate UDP: His-213, Gly-216, and Lys-219. His-213 contacts Mn(2+). Residues Gly-216 and Lys-219 each contribute to the UDP-alpha-D-glucose site. Disordered stretches follow at residues 264 to 331 (VKGE…ANFP), 381 to 444 (PEPT…RGNA), 460 to 533 (KHRR…GVPA), and 603 to 686 (KPLR…VLET). Low complexity-rich tracts occupy residues 285–308 (SSQS…YTSH) and 398–416 (SAAS…ASPT). A not required for catalytic activity region spans residues 307-686 (SHGASWDASR…TEEERDVLET (380 aa)). Composition is skewed to polar residues over residues 424–442 (VTPT…TTRG) and 471–483 (AATS…GRAQ). The span at 677–686 (TEEERDVLET) shows a compositional bias: acidic residues.

It belongs to the glycosyltransferase 8 family. Glycogenin subfamily. As to quaternary structure, interacts with glycogen synthase gsy-1; the interaction is direct. Mn(2+) serves as cofactor.

It localises to the cytoplasm. The protein resides in the vacuole. It catalyses the reaction L-tyrosyl-[glycogenin] + UDP-alpha-D-glucose = alpha-D-glucosyl-L-tyrosyl-[glycogenin] + UDP + H(+). It carries out the reaction [1,4-alpha-D-glucosyl](n)-L-tyrosyl-[glycogenin] + UDP-alpha-D-glucose = [1,4-alpha-D-glucosyl](n+1)-L-tyrosyl-[glycogenin] + UDP + H(+). In terms of biological role, self-glucosylating initiator of glycogen synthesis. It catalyzes the formation of a short alpha (1,4)-glucosyl chain covalently attached via a glucose 1-O-tyrosyl linkage to internal tyrosine residues and these chains act as primers for the elongation reaction catalyzed by glycogen synthase. This chain is Glycogenin, found in Neurospora crassa (strain ATCC 24698 / 74-OR23-1A / CBS 708.71 / DSM 1257 / FGSC 987).